The following is a 354-amino-acid chain: Carbonic anhydrase 12 (354 aa).

A signal peptide spans 1-24 (MPHRSLRATVVLLLVILKKQPSSS). Topologically, residues 25–301 (APLNGSKWTY…QGLLTDTGLS (277 aa)) are extracellular. Residues N28, N42, N80, and N88 are each glycosylated (N-linked (GlcNAc...) asparagine). One can recognise an Alpha-carbonic anhydrase domain in the interval 30–290 (SKWTYVGPAG…FDERLVYISF (261 aa)). C50 and C231 are oxidised to a cystine. H94 acts as the Proton donor/acceptor in catalysis. The Zn(2+) site is built by H120, H122, and H146. Position 227–228 (227–228 (TT)) interacts with substrate. Residues 302 to 322 (LGIILSVALAGVLGISIVLAV) traverse the membrane as a helical segment. The Cytoplasmic segment spans residues 323 to 354 (SIWLFKRKKSKKGDNKGVIYKPAIKKEAEVHA).

The protein belongs to the alpha-carbonic anhydrase family. As to quaternary structure, homodimer. It depends on Zn(2+) as a cofactor.

Its subcellular location is the membrane. The protein localises to the cell membrane. It carries out the reaction hydrogencarbonate + H(+) = CO2 + H2O. Inhibited by acetazolamide. Functionally, reversible hydration of carbon dioxide. In Mus musculus (Mouse), this protein is Carbonic anhydrase 12.